A 421-amino-acid chain; its full sequence is Forkhead box protein J1 (421 aa).

2 disordered regions span residues 1 to 34 (MAES…DSLT) and 48 to 116 (KAPA…DYAT). Positions 66-80 (PGSAAPGSPLAADPA) are enriched in low complexity. A compositionally biased stretch (polar residues) spans 90–99 (KPTSSCTSRS). Positions 120 to 210 (VKPPYSYATL…YAERLLSGAF (91 aa)) form a DNA-binding region, fork-head. A disordered region spans residues 261 to 302 (AGWGAGEGRLGHKRKQPLPKRVAKVPRPPSTLLPTPEEQGEL). Residues 271-284 (GHKRKQPLPKRVAK) are compositionally biased toward basic residues.

This sequence belongs to the FOXJ1 family. As to expression, testis, oviduct, lung and brain cortex.

The protein localises to the nucleus. Its function is as follows. Transcription factor specifically required for the formation of motile cilia. Acts by activating transcription of genes that mediate assembly of motile cilia, such as CFAP157. Binds the DNA consensus sequences 5'-HWDTGTTTGTTTA-3' or 5'-KTTTGTTGTTKTW-3' (where H is not G, W is A or T, D is not C, and K is G or T). Activates the transcription of a variety of ciliary proteins in the developing brain and lung. This is Forkhead box protein J1 from Homo sapiens (Human).